The primary structure comprises 169 residues: MSTAAKRRLIRDFKRLTSDAPIGISGSPNPDNIMVWNAVIFGPPETPFEDGSFRLTLTFTDAYPNKPPTVRFISKMFHPNIYANGELCLDILQNRWSPTYDVAAILTSVQSLLNDPNPASPANVDAAQLFKENLKEYERRVKKTVELSWVDNADEIEAEVVEADEGSSS.

In terms of domain architecture, UBC core spans 4-150 (AAKRRLIRDF…VKKTVELSWV (147 aa)). The Glycyl thioester intermediate role is filled by cysteine 88.

This sequence belongs to the ubiquitin-conjugating enzyme family.

Its subcellular location is the cytoplasm. It localises to the nucleus. The enzyme catalyses S-ubiquitinyl-[E1 ubiquitin-activating enzyme]-L-cysteine + [E2 ubiquitin-conjugating enzyme]-L-cysteine = [E1 ubiquitin-activating enzyme]-L-cysteine + S-ubiquitinyl-[E2 ubiquitin-conjugating enzyme]-L-cysteine.. The protein operates within protein modification; protein ubiquitination. Catalyzes the covalent attachment of ubiquitin to other proteins. Plays a role in transcription regulation by catalyzing the monoubiquitination of histone H2B to form H2BK123ub1. H2BK123ub1 gives a specific tag for epigenetic transcriptional activation and is also a prerequisite for H3K4me and H3K79me formation. Also involved in postreplication repair of UV-damaged DNA, in N-end rule-dependent protein degradation and in sporulation. The sequence is that of Ubiquitin-conjugating enzyme E2 2 (UBC2) from Cryptococcus neoformans var. neoformans serotype D (strain B-3501A) (Filobasidiella neoformans).